The primary structure comprises 596 residues: RNA-binding protein involved in heterochromatin assembly dri1 (596 aa).

Serine 176 bears the Phosphoserine mark. An RRM domain is found at 236-314 (KIVHVAGLTN…RMLEIIPSST (79 aa)). The segment at 335–364 (RPGDWNCPMCGFSNFQRRTSCFRCSFPGPT) adopts a RanBP2-type 1 zinc-finger fold. Serine 429 is subject to Phosphoserine. 2 RanBP2-type zinc fingers span residues 437–468 (RAGD…SRAT) and 552–580 (DQGD…PHYS).

Interacts with dpb4. Interacts with chp1.

It is found in the chromosome. It localises to the nucleus. Its subcellular location is the cytoplasm. The protein resides in the cytoplasmic granule. Functionally, mediates heterochromatin assembly by promoting RNAi-mediated heterochromatin silencing and histone deacetylation. Binds pericetromeric transcripts and recruits the RNA-induced transcriptional silencing (RITS) complex to heterochromatin. Recruits sir2 to chromatin to promote deacetylation of 'Lys-9' of histone H3. Involved in bipolar spindle assembly during mitosis. Required for proper localization of kinesin-14/Klp2 on the spindle microtubules. In Schizosaccharomyces pombe (strain 972 / ATCC 24843) (Fission yeast), this protein is RNA-binding protein involved in heterochromatin assembly dri1.